The primary structure comprises 270 residues: MPELPEVETTRRGIAPHLEGQRVSRVIVRDSRLRWPIPEDLDIRLSGQRIVQVDRRAKYLLIQAEVGTLISHLGMSGNLRLVEAGLPALKHEHVDIELESGLALRYTDPRRFGAMLWSLDPHNHELLIRLGPEPLTDLFDGERLYERSRGKSIAVKPFVMDNAVVVGVGNIYATEALFAAGIDPRREAGGISRARYLKLAIEIKRILAYAIERGGTTLRDFIGGDGKPGYFQQELFVYGRGGQPCKVCGTTLREIKLGQRASVYCPKCQR.

The active-site Schiff-base intermediate with DNA is proline 2. The Proton donor role is filled by glutamate 3. The Proton donor; for beta-elimination activity role is filled by lysine 58. Histidine 91, arginine 110, and lysine 151 together coordinate DNA. The segment at 236-270 (FVYGRGGQPCKVCGTTLREIKLGQRASVYCPKCQR) adopts an FPG-type zinc-finger fold. Arginine 260 functions as the Proton donor; for delta-elimination activity in the catalytic mechanism.

It belongs to the FPG family. In terms of assembly, monomer. The cofactor is Zn(2+).

The catalysed reaction is Hydrolysis of DNA containing ring-opened 7-methylguanine residues, releasing 2,6-diamino-4-hydroxy-5-(N-methyl)formamidopyrimidine.. It catalyses the reaction 2'-deoxyribonucleotide-(2'-deoxyribose 5'-phosphate)-2'-deoxyribonucleotide-DNA = a 3'-end 2'-deoxyribonucleotide-(2,3-dehydro-2,3-deoxyribose 5'-phosphate)-DNA + a 5'-end 5'-phospho-2'-deoxyribonucleoside-DNA + H(+). Functionally, involved in base excision repair of DNA damaged by oxidation or by mutagenic agents. Acts as a DNA glycosylase that recognizes and removes damaged bases. Has a preference for oxidized purines, such as 7,8-dihydro-8-oxoguanine (8-oxoG). Has AP (apurinic/apyrimidinic) lyase activity and introduces nicks in the DNA strand. Cleaves the DNA backbone by beta-delta elimination to generate a single-strand break at the site of the removed base with both 3'- and 5'-phosphates. This Pseudomonas savastanoi pv. phaseolicola (strain 1448A / Race 6) (Pseudomonas syringae pv. phaseolicola (strain 1448A / Race 6)) protein is Formamidopyrimidine-DNA glycosylase.